Here is a 556-residue protein sequence, read N- to C-terminus: Delta-1-pyrroline-5-carboxylate dehydrogenase 12A1, mitochondrial (556 aa).

282–287 (GSSRVA) provides a ligand contact to NAD(+). Residue Glu-301 is the Proton acceptor of the active site. Residue Cys-336 is the Nucleophile of the active site.

The protein belongs to the aldehyde dehydrogenase family. Highly expressed in flowers. Constitutively expressed at low levels in the other tissues. Highly expressed in pollen grains and tissues undergoing cell death. Expressed in old leaves, mature siliques and developing embryos.

The protein resides in the mitochondrion matrix. It catalyses the reaction (S)-1-pyrroline-5-carboxylate + NAD(+) + 2 H2O = L-glutamate + NADH + H(+). It participates in amino-acid degradation; L-proline degradation into L-glutamate; L-glutamate from L-proline: step 2/2. Plays a role in the inhibition of programmed cell death by converting the toxic proline catabolism intermediate (s)-1-pyrroline-5-carboxylate (P5C) to glutamate. The chain is Delta-1-pyrroline-5-carboxylate dehydrogenase 12A1, mitochondrial from Arabidopsis thaliana (Mouse-ear cress).